The sequence spans 378 residues: Deoxyhypusine synthase (378 aa).

Residues S107 to S111, S133 to G135, E139, and D253 contribute to the NAD(+) site. E138–E139 is a spermidine binding site. Residue D258 coordinates spermidine. NAD(+) is bound at residue G300. Spermidine is bound at residue H305. Residue T325–G326 participates in NAD(+) binding. Residues G331–D333 and E340–K346 each bind spermidine. K346 serves as the catalytic Nucleophile. D359 to A360 contributes to the NAD(+) binding site.

This sequence belongs to the deoxyhypusine synthase family. It depends on NAD(+) as a cofactor.

It carries out the reaction [eIF5A protein]-L-lysine + spermidine = [eIF5A protein]-deoxyhypusine + propane-1,3-diamine. The protein operates within protein modification; eIF5A hypusination. Catalyzes the NAD-dependent oxidative cleavage of spermidine and the subsequent transfer of the butylamine moiety of spermidine to the epsilon-amino group of a specific lysine residue of the eIF-5A precursor protein to form the intermediate deoxyhypusine residue. This Debaryomyces hansenii (strain ATCC 36239 / CBS 767 / BCRC 21394 / JCM 1990 / NBRC 0083 / IGC 2968) (Yeast) protein is Deoxyhypusine synthase (DYS1).